A 387-amino-acid chain; its full sequence is Protein adenylyltransferase VopS (387 aa).

ATP-binding positions include 76-77 (IT), 122-124 (LDS), 353-355 (GNG), and Arg359. The Fido domain occupies 278–387 (LNMDNLKELH…NAENSLHGIK (110 aa)).

Its subcellular location is the secreted. It catalyses the reaction L-tyrosyl-[protein] + ATP = O-(5'-adenylyl)-L-tyrosyl-[protein] + diphosphate. The enzyme catalyses L-threonyl-[protein] + ATP = 3-O-(5'-adenylyl)-L-threonyl-[protein] + diphosphate. Its function is as follows. Adenylyltransferase involved in virulence by mediating the addition of adenosine 5'-monophosphate (AMP) to specific threonine residue of host Rho GTPases RhoA, Rac and Cdc42. The resulting AMPylation prevents the interaction of Rho GTPases with downstream effectors, thereby inhibiting actin assembly in infected cells. The polypeptide is Protein adenylyltransferase VopS (vopS) (Vibrio parahaemolyticus serotype O3:K6 (strain RIMD 2210633)).